The sequence spans 173 residues: Sialic acid TRAP transporter small permease protein SiaQ (173 aa).

A run of 4 helical transmembrane segments spans residues 13–33 (IEEI…TWQI), 46–66 (SEEL…AIAI), 87–107 (LSLV…IIVL), and 123–143 (LGIS…FMVF).

It belongs to the TRAP transporter small permease family. In terms of assembly, the complex comprises the extracytoplasmic solute receptor protein SiaP, and the two transmembrane proteins SiaQ and SiaM. SiaQ and SiaM form a tight 1:1 complex.

Its subcellular location is the cell inner membrane. Part of the tripartite ATP-independent periplasmic (TRAP) transport system SiaPQM that catalyzes unidirectional Na(+)-dependent sialic acid uptake. This chain is Sialic acid TRAP transporter small permease protein SiaQ, found in Vibrio cholerae serotype O1 (strain ATCC 39315 / El Tor Inaba N16961).